Here is a 293-residue protein sequence, read N- to C-terminus: Elongation factor Ts (293 aa).

The interval 80-83 (TDFV) is involved in Mg(2+) ion dislocation from EF-Tu.

It belongs to the EF-Ts family.

It is found in the cytoplasm. Associates with the EF-Tu.GDP complex and induces the exchange of GDP to GTP. It remains bound to the aminoacyl-tRNA.EF-Tu.GTP complex up to the GTP hydrolysis stage on the ribosome. The sequence is that of Elongation factor Ts from Aeromonas salmonicida (strain A449).